A 337-amino-acid chain; its full sequence is Phosphatidate cytidylyltransferase, mitochondrial (337 aa).

It belongs to the TAM41 family. Mg(2+) serves as cofactor.

The protein resides in the mitochondrion inner membrane. The catalysed reaction is a 1,2-diacyl-sn-glycero-3-phosphate + CTP + H(+) = a CDP-1,2-diacyl-sn-glycerol + diphosphate. The protein operates within phospholipid metabolism; CDP-diacylglycerol biosynthesis; CDP-diacylglycerol from sn-glycerol 3-phosphate: step 3/3. In terms of biological role, catalyzes the conversion of phosphatidic acid (PA) to CDP-diacylglycerol (CDP-DAG), an essential intermediate in the synthesis of phosphatidylglycerol, cardiolipin and phosphatidylinositol. The polypeptide is Phosphatidate cytidylyltransferase, mitochondrial (Tamm41) (Mus musculus (Mouse)).